The sequence spans 87 residues: UPF0367 protein Syncc9902_0316 (87 aa).

It belongs to the UPF0367 family.

The sequence is that of UPF0367 protein Syncc9902_0316 from Synechococcus sp. (strain CC9902).